We begin with the raw amino-acid sequence, 150 residues long: Ribonuclease K6 (150 aa).

A signal peptide spans 1-23; that stretch reads MVLCFPLLLLLLVLWGPVCPLHA. Residue His-38 is the Proton acceptor of the active site. Intrachain disulfides connect Cys-46–Cys-104, Cys-60–Cys-114, Cys-78–Cys-129, and Cys-85–Cys-92. Residues 61–65 and Lys-86 contribute to the substrate site; that span reads KHQNT. Asn-100 is a glycosylation site (N-linked (GlcNAc...) asparagine). Substrate is bound at residue Arg-105. His-145 functions as the Proton donor in the catalytic mechanism.

Belongs to the pancreatic ribonuclease family. As to quaternary structure, interacts (via N-terminus) with bacterial lipopolysaccharide (LPS).

It localises to the secreted. The protein resides in the lysosome. It is found in the cytoplasmic granule. Functionally, ribonuclease which shows a preference for the pyrimidines uridine and cytosine. Has potent antibacterial activity against a range of Gram-positive and Gram-negative bacteria, including P.aeruginosa, A.baumanii, M.luteus, S.aureus, E.faecalis, E.faecium, S.saprophyticus and E.coli. Causes loss of bacterial membrane integrity, and also promotes agglutination of Gram-negative bacteria. Probably contributes to urinary tract sterility. Bactericidal activity is independent of RNase activity. This chain is Ribonuclease K6 (RNASE6), found in Pan troglodytes (Chimpanzee).